The primary structure comprises 57 residues: MSRIVAPAAASVVVGLLLGAATIFGMTLMVQQDTKPPLPGGDPQSSVLNRVEYGNRT.

The N-terminal stretch at 1–32 is a signal peptide; the sequence is MSRIVAPAAASVVVGLLLGAATIFGMTLMVQQ. A disordered region spans residues 34–57; the sequence is TKPPLPGGDPQSSVLNRVEYGNRT.

In Mycobacterium leprae (strain TN), this protein is Putative secreted protein ML2569.1.